Reading from the N-terminus, the 329-residue chain is L-lactate dehydrogenase (329 aa).

Residues Val-18, Glu-39, Lys-46, Tyr-71, and 85–86 (GA) each bind NAD(+). Substrate-binding residues include Gln-88 and Arg-94. NAD(+)-binding positions include Ser-107, 124-126 (AAN), and Ser-149. 126 to 129 (NPVD) serves as a coordination point for substrate. Residue 154-157 (DSAR) participates in substrate binding. The beta-D-fructose 1,6-bisphosphate site is built by Arg-159 and His-174. Catalysis depends on His-181, which acts as the Proton acceptor. The residue at position 226 (Tyr-226) is a Phosphotyrosine. Residue Thr-235 coordinates substrate.

It belongs to the LDH/MDH superfamily. LDH family. In terms of assembly, homotetramer.

It is found in the cytoplasm. The catalysed reaction is (S)-lactate + NAD(+) = pyruvate + NADH + H(+). Its pathway is fermentation; pyruvate fermentation to lactate; (S)-lactate from pyruvate: step 1/1. Allosterically activated by fructose 1,6-bisphosphate (FBP). Functionally, catalyzes the conversion of lactate to pyruvate. The polypeptide is L-lactate dehydrogenase (Streptococcus agalactiae serotype V (strain ATCC BAA-611 / 2603 V/R)).